The primary structure comprises 932 residues: DNA mismatch repair protein MutS (932 aa).

Gly615–Ser622 contacts ATP.

Belongs to the DNA mismatch repair MutS family.

Its function is as follows. This protein is involved in the repair of mismatches in DNA. It is possible that it carries out the mismatch recognition step. This protein has a weak ATPase activity. This Clostridium botulinum (strain 657 / Type Ba4) protein is DNA mismatch repair protein MutS.